Here is a 165-residue protein sequence, read N- to C-terminus: Nucleotide-binding protein Ccur92_01650 (165 aa).

The protein belongs to the YajQ family.

Its function is as follows. Nucleotide-binding protein. The chain is Nucleotide-binding protein Ccur92_01650 from Campylobacter curvus (strain 525.92).